A 362-amino-acid polypeptide reads, in one-letter code: uncharacterized protein (362 aa).

Ala-2 carries the post-translational modification N-acetylalanine.

This sequence belongs to the Gfo/Idh/MocA family. As to quaternary structure, homodimer.

This is an uncharacterized protein from Arabidopsis thaliana (Mouse-ear cress).